A 642-amino-acid chain; its full sequence is Uromodulin (642 aa).

A signal peptide spans 1-26; that stretch reads MGQLSSLTSVWMVVVVTSWVIIAANI. Positions 32–64 constitute an EGF-like 1 domain; sequence RSCSECHSNATCMEDGMVTTCSCLVGFTGSGFE. Disulfide bonds link C34-C43, C37-C52, C54-C65, C71-C85, C79-C94, C96-C108, C114-C128, C122-C137, C139-C150, C152-C163, C157-C172, C176-C269, C197-C284, C219-C257, C225-C289, C250-C258, C299-C308, C302-C317, C319-C348, C336-C426, and C367-C390. An N-linked (GlcNAc...) asparagine glycan is attached at N40. Residues 67 to 109 form the EGF-like 2; calcium-binding domain; sequence DLDECAIPGAHNCSEGSSCMNTLGSYLCTCPDGFRLTPGLGCI. N78 is a glycosylation site (N-linked (GlcNAc...) asparagine). Residues 110 to 151 form the EGF-like 3; calcium-binding domain; sequence DVDECSEPGLSRCHALATCINNKGNYSCVCPAGYRGDGQHCE. N134 carries an N-linked (GlcNAc...) asparagine glycan. Residues 152 to 173 form a beta hairpin region; it reads CSPGSCGPGLDCVPVGDALVCA. Residues 174-293 are D10C; sequence DPCQEHRILD…CYLAYCTDPT (120 aa). N-linked (GlcNAc...) asparagine glycosylation is found at N234 and N246. The N-linked (GlcNAc...) asparagine glycan is linked to N277. Positions 294 to 325 constitute an EGF-like 4 domain; it reads SVLGTCEECSVEEDCKSHDGMWSCQCKQDFNV. The N-linked (GlcNAc...) asparagine glycan is linked to N324. The ZP-N stretch occupies residues 335–430; sequence ECRPNDIKVS…KINFECSYPL (96 aa). Residues 335 to 590 form the ZP domain; the sequence is ECRPNDIKVS…PTCSGTRFRS (256 aa). N-linked (GlcNAc...) asparagine glycosylation is found at N397 and N448. The tract at residues 431 to 454 is flexible ZP-N/ZP-C linker; important for secretion and polymerization into filaments; sequence DMKVSLETSLQPIVSSLNISVGGT. The internal hydrophobic patch (IHP) stretch occupies residues 455 to 465; sequence GMFTVRMALFQ. Positions 455 to 590 are ZP-C; the sequence is GMFTVRMALF…PTCSGTRFRS (136 aa). 3 disulfide bridges follow: C507-C567, C528-C583, and C572-C579. N-linked (GlcNAc...) asparagine glycosylation is present at N514. Residues 587–590 are essential for cleavage by HPN; the sequence is RFRS. Residues 599 to 607 are external hydrophobic patch (EHP); regulates polymerization into filaments; that stretch reads VLNLGPITR. A lipid anchor (GPI-anchor amidated serine) is attached at S620. The propeptide at 621–642 is removed in mature form; that stretch reads SLGFLKVCLPLLLSATLTLMFQ.

Homodimer that then polymerizes into long filaments. The filaments can additionally assemble laterally to form a sheet. The filaments consist of a zigzag-shaped backbone with laterally protruding arms which interact with bacterial adhesin fimH. Two fimH molecules can bind to a single UMOD monomer. In terms of processing, N-glycosylated. Post-translationally, proteolytically cleaved at a conserved C-terminal proteolytic cleavage site to generate the secreted form found in urine. This cleavage is catalyzed by HPN. Detected in kidney and pancreas.

The protein resides in the apical cell membrane. It localises to the basolateral cell membrane. Its subcellular location is the cell projection. It is found in the cilium membrane. The protein localises to the secreted. Functionally, functions in biogenesis and organization of the apical membrane of epithelial cells of the thick ascending limb of Henle's loop (TALH), where it promotes formation of complex filamentous gel-like structure that may play a role in the water barrier permeability. May serve as a receptor for binding and endocytosis of cytokines (IL-1, IL-2) and TNF. Facilitates neutrophil migration across renal epithelia. In the urine, may contribute to colloid osmotic pressure, retards passage of positively charged electrolytes, and inhibits formation of liquid containing supersaturated salts and subsequent formation of salt crystals. Protects against urinary tract infections by binding to type 1 fimbriated E.coli. Binds to bacterial adhesin fimH which mediates the stable formation of bacterial aggregates, prevents the binding of E.coli to uroplakins UPK1A and UPK1B which act as urothelial receptors for type I fimbriae, and allows for pathogen clearance through micturation. Also promotes aggregation of other bacteria including K.pneumoniae, P.aeruginosa and S.mitis and so may also protect against other uropathogens. This chain is Uromodulin (UMOD), found in Canis lupus familiaris (Dog).